Consider the following 79-residue polypeptide: D-alanyl carrier protein (79 aa).

A Carrier domain is found at 1 to 77; that stretch reads MDTKQAVLDI…KIIAKVESLR (77 aa). O-(pantetheine 4'-phosphoryl)serine is present on Ser35.

It belongs to the DltC family. In terms of processing, 4'-phosphopantetheine is transferred from CoA to a specific serine of apo-DCP.

It localises to the cytoplasm. Its pathway is cell wall biogenesis; lipoteichoic acid biosynthesis. Functionally, carrier protein involved in the D-alanylation of lipoteichoic acid (LTA). The loading of thioester-linked D-alanine onto DltC is catalyzed by D-alanine--D-alanyl carrier protein ligase DltA. The DltC-carried D-alanyl group is further transferred to cell membrane phosphatidylglycerol (PG) by forming an ester bond, probably catalyzed by DltD. D-alanylation of LTA plays an important role in modulating the properties of the cell wall in Gram-positive bacteria, influencing the net charge of the cell wall. The polypeptide is D-alanyl carrier protein (Lactobacillus gasseri (strain ATCC 33323 / DSM 20243 / BCRC 14619 / CIP 102991 / JCM 1131 / KCTC 3163 / NCIMB 11718 / NCTC 13722 / AM63)).